The chain runs to 241 residues: DNA repair protein RecO (241 aa).

It belongs to the RecO family.

Its function is as follows. Involved in DNA repair and RecF pathway recombination. This is DNA repair protein RecO from Phocaeicola vulgatus (strain ATCC 8482 / DSM 1447 / JCM 5826 / CCUG 4940 / NBRC 14291 / NCTC 11154) (Bacteroides vulgatus).